We begin with the raw amino-acid sequence, 174 residues long: UPF0398 protein LACR_0544 (174 aa).

It belongs to the UPF0398 family.

In Lactococcus lactis subsp. cremoris (strain SK11), this protein is UPF0398 protein LACR_0544.